A 79-amino-acid chain; its full sequence is D-alanyl carrier protein (79 aa).

Residues 1 to 77 (MTVEEKIIDA…KIVEGVKELQ (77 aa)) form the Carrier domain. Ser-35 carries the O-(pantetheine 4'-phosphoryl)serine modification.

This sequence belongs to the DltC family. Post-translationally, 4'-phosphopantetheine is transferred from CoA to a specific serine of apo-DCP.

It localises to the cytoplasm. It functions in the pathway cell wall biogenesis; lipoteichoic acid biosynthesis. Functionally, carrier protein involved in the D-alanylation of lipoteichoic acid (LTA). The loading of thioester-linked D-alanine onto DltC is catalyzed by D-alanine--D-alanyl carrier protein ligase DltA. The DltC-carried D-alanyl group is further transferred to cell membrane phosphatidylglycerol (PG) by forming an ester bond, probably catalyzed by DltD. D-alanylation of LTA plays an important role in modulating the properties of the cell wall in Gram-positive bacteria, influencing the net charge of the cell wall. This Streptococcus uberis (strain ATCC BAA-854 / 0140J) protein is D-alanyl carrier protein.